The chain runs to 358 residues: Neutral protease 2 homolog PADG_00776 (358 aa).

The N-terminal stretch at 1–19 (MRRVSGILAVAAFTISAFA) is a signal peptide. A propeptide spanning residues 20–185 (GVIQPVAKDA…MNQFVKIAKL (166 aa)) is cleaved from the precursor. Cystine bridges form between cysteine 188/cysteine 259 and cysteine 266/cysteine 284. The N-linked (GlcNAc...) asparagine glycan is linked to asparagine 249. Histidine 309 serves as a coordination point for Zn(2+). Glutamate 310 is an active-site residue. 2 residues coordinate Zn(2+): histidine 313 and aspartate 324.

Belongs to the peptidase M35 family. Zn(2+) serves as cofactor.

Its subcellular location is the secreted. It carries out the reaction Preferential cleavage of bonds with hydrophobic residues in P1'. Also 3-Asn-|-Gln-4 and 8-Gly-|-Ser-9 bonds in insulin B chain.. Functionally, secreted metalloproteinase that allows assimilation of proteinaceous substrates. Shows high activities on basic nuclear substrates such as histone and protamine. This Paracoccidioides brasiliensis (strain Pb18) protein is Neutral protease 2 homolog PADG_00776.